The chain runs to 601 residues: Glutamine--fructose-6-phosphate aminotransferase [isomerizing] (601 aa).

Cysteine 2 serves as the catalytic Nucleophile; for GATase activity. The Glutamine amidotransferase type-2 domain maps to 2 to 216; the sequence is CGIVGYIGTN…DKEIVIVTKD (215 aa). SIS domains lie at 282 to 421 and 453 to 591; these read IIDE…EIGD and IAGE…VDKP. Lysine 596 serves as the catalytic For Fru-6P isomerization activity.

As to quaternary structure, homodimer.

The protein resides in the cytoplasm. The catalysed reaction is D-fructose 6-phosphate + L-glutamine = D-glucosamine 6-phosphate + L-glutamate. In terms of biological role, catalyzes the first step in hexosamine metabolism, converting fructose-6P into glucosamine-6P using glutamine as a nitrogen source. The protein is Glutamine--fructose-6-phosphate aminotransferase [isomerizing] of Listeria monocytogenes serovar 1/2a (strain ATCC BAA-679 / EGD-e).